We begin with the raw amino-acid sequence, 812 residues long: Lon protease (812 aa).

The 194-residue stretch at 11–204 folds into the Lon N-terminal domain; that stretch reads IPVLPLRDVV…YLMAMMESEI (194 aa). Position 356 to 363 (356 to 363) interacts with ATP; the sequence is GPPGVGKT. Positions 592-773 constitute a Lon proteolytic domain; that stretch reads ENRVGQVTGL…EEEQTLSLQN (182 aa). Residues Ser679 and Lys722 contribute to the active site. The span at 745–764 shows a compositional bias: basic and acidic residues; sequence KENPDNAKADQDRHPVKNNE. The interval 745–766 is disordered; the sequence is KENPDNAKADQDRHPVKNNEEE.

It belongs to the peptidase S16 family. Homohexamer. Organized in a ring with a central cavity. ATP binding and hydrolysis do not affect the oligomeric state of the enzyme.

It is found in the cytoplasm. It catalyses the reaction Hydrolysis of proteins in presence of ATP.. Contains an allosteric site (distinct from its active site), whose occupancy by an unfolded polypeptide leads to enzyme activation. Its function is as follows. ATP-dependent serine protease that mediates the selective degradation of mutant and abnormal proteins as well as certain short-lived regulatory proteins. Required for cellular homeostasis and for survival from DNA damage and developmental changes induced by stress. Degrades polypeptides processively to yield small peptide fragments that are 5 to 10 amino acids long. Binds to DNA in a double-stranded, site-specific manner. Endogenous substrates include the regulatory proteins RcsA and SulA, the transcriptional activator SoxS, and UmuD. Its overproduction specifically inhibits translation through at least two different pathways, one of them being the YoeB-YefM toxin-antitoxin system. The protein is Lon protease of Shigella dysenteriae serotype 1 (strain Sd197).